We begin with the raw amino-acid sequence, 405 residues long: Cytochrome P450 109 (405 aa).

Cysteine 351 is a heme binding site.

The protein belongs to the cytochrome P450 family. It depends on heme as a cofactor.

Its function is as follows. Cytochromes P450 are a group of heme-thiolate monooxygenases. They oxidize a variety of structurally unrelated compounds, including steroids, fatty acids, and xenobiotics. In Bacillus spizizenii (strain ATCC 23059 / NRRL B-14472 / W23) (Bacillus subtilis subsp. spizizenii), this protein is Cytochrome P450 109 (cyp109).